Consider the following 527-residue polypeptide: Amidophosphoribosyltransferase (527 aa).

The interval 1–30 is disordered; sequence MAVDSDYVTDRAAGSRQTVTGQQPEQDLNS. Positions 1-34 are excised as a propeptide; the sequence is MAVDSDYVTDRAAGSRQTVTGQQPEQDLNSPREE. Positions 15-29 are enriched in polar residues; that stretch reads SRQTVTGQQPEQDLN. Catalysis depends on cysteine 35, which acts as the Nucleophile. The region spanning 35–261 is the Glutamine amidotransferase type-2 domain; it reads CGVFGVWAPG…PGELLAIDAD (227 aa). Cysteine 276 contacts [4Fe-4S] cluster. Mg(2+) contacts are provided by serine 323, aspartate 385, and aspartate 386. Positions 422, 478, and 481 each coordinate [4Fe-4S] cluster.

This sequence in the C-terminal section; belongs to the purine/pyrimidine phosphoribosyltransferase family. Mg(2+) is required as a cofactor. Requires [4Fe-4S] cluster as cofactor.

It carries out the reaction 5-phospho-beta-D-ribosylamine + L-glutamate + diphosphate = 5-phospho-alpha-D-ribose 1-diphosphate + L-glutamine + H2O. It functions in the pathway purine metabolism; IMP biosynthesis via de novo pathway; N(1)-(5-phospho-D-ribosyl)glycinamide from 5-phospho-alpha-D-ribose 1-diphosphate: step 1/2. Catalyzes the formation of phosphoribosylamine from phosphoribosylpyrophosphate (PRPP) and glutamine. The polypeptide is Amidophosphoribosyltransferase (Mycobacterium bovis (strain ATCC BAA-935 / AF2122/97)).